The chain runs to 142 residues: Aspartate 1-decarboxylase (142 aa).

Catalysis depends on S25, which acts as the Schiff-base intermediate with substrate; via pyruvic acid. S25 is modified (pyruvic acid (Ser)). T57 lines the substrate pocket. Y58 (proton donor) is an active-site residue. Residue 73 to 75 participates in substrate binding; sequence GAA.

Belongs to the PanD family. As to quaternary structure, heterooctamer of four alpha and four beta subunits. Pyruvate is required as a cofactor. Is synthesized initially as an inactive proenzyme, which is activated by self-cleavage at a specific serine bond to produce a beta-subunit with a hydroxyl group at its C-terminus and an alpha-subunit with a pyruvoyl group at its N-terminus.

It is found in the cytoplasm. It catalyses the reaction L-aspartate + H(+) = beta-alanine + CO2. It functions in the pathway cofactor biosynthesis; (R)-pantothenate biosynthesis; beta-alanine from L-aspartate: step 1/1. In terms of biological role, catalyzes the pyruvoyl-dependent decarboxylation of aspartate to produce beta-alanine. The chain is Aspartate 1-decarboxylase from Arthrobacter sp. (strain FB24).